A 743-amino-acid polypeptide reads, in one-letter code: MTPRRVAKLVQFSGSYLNTEWARKFILGSLLQRYNPQSLTTVGSSAAGNSGEDASLDKELLHLQRSLSEVWSLPAQPLDAVSEGRILRLLARYATGEGVMSIEALNELSHVLSCIRGSPQRVEGPIDMEELLLAIGYAKPGDNLRRVAFAGELQYPPSALAHMRAHLRDDMERDGSDPFDILRVVTHNPAYAIDSASTSEVDDAIGVHKDPVTGEECFVVYVSDATVYCPFDSPLEQLTARLLTTTTYLPEGVFFMLPKPIVDAATLREDRPCRTFDIRFQIDEVTGELKNYSVGVGWLHKLRRITYDEVQALYDEEAQVGNQHHHTERESTQASPAKREEGKKGMVASGGTSSCRPSWMTVEDESILRRIYRAAQKRYETRQLRAGDRFIHADLPEPLIKVGAGAQVLSVEDQIIGTRDARLAVAEMMIAANEVCSRVAQENHLSIPFRGTRELSLDHVAAKSYREPHGVVSVQSLDPQYVFFAEAMQRSIRQLSGVTRAVYFHTPIYHAGLDTHNYTHSTSPLRRYADMLVHHQLKVWLWRTSHCSSGGGVLHSAQKSSPVLIEQPIAEHTMATLCSMISSKQEQSSILQESSQRYWLLKHIKQNILTKSPHHRFICLVGDTRSVKCAPEYARFVVECSHDSPSQPDGGVHRTVPWAGRWKQRHHEYLYVSDIYITELQFAHVVLHSLPDVVVGAVVECEVREVHPTQGYLSLAIVKVWSGGDERRFEPLWKKCLLPSLDS.

The N-terminal 67 residues, 1 to 67, are a transit peptide targeting the mitochondrion; the sequence is MTPRRVAKLV…KELLHLQRSL (67 aa). The 357-residue stretch at 186–542 folds into the RNB domain; it reads THNPAYAIDS…VHHQLKVWLW (357 aa). A disordered region spans residues 320-357; sequence VGNQHHHTERESTQASPAKREEGKKGMVASGGTSSCRP. Positions 325 to 344 are enriched in basic and acidic residues; it reads HHTERESTQASPAKREEGKK.

Belongs to the RNR ribonuclease family. Component of the mitochondrial 3' processome (MPsome) complex composed at least of terminal uridylyltransferase KRET1/TUT1, 3'-5' exonuclease DSS1, MPSS1, MPSS2 and MPSS3. Within the complex, interacts with KRET1 and MPSS2. Component of the mitochondrial degradosome complex composed at least of 3'-5' exonuclease DSS1 and helicase SUV3. Within the complex, interacts with helicase SUV3.

It is found in the mitochondrion. It catalyses the reaction Exonucleolytic cleavage in the 3'- to 5'-direction to yield nucleoside 5'-phosphates.. 3'-5'exoribonuclease which is involved in the post-transcriptional processing, editing and degradation of mitochondrial RNAs, including mRNAs, rRNAs and guided RNAs (gRNA). As part of the mitochondrial 3' processome (MPsome), involved in the maturation of guided RNA (gRNA) precursors by catalyzing the processive 3'-5' degradation of uridylated gRNA precursors. Plays a role in the degradation of 12S rRNA processing intermediates and maturation by-products. In Trypanosoma brucei brucei, this protein is Mitochondrial exoribonuclease DSS-1.